A 327-amino-acid chain; its full sequence is Replication factor C small subunit (327 aa).

ATP is bound at residue 47-54 (GPPGTGKT).

Belongs to the activator 1 small subunits family. RfcS subfamily. In terms of assembly, heteromultimer composed of small subunits (RfcS) and large subunits (RfcL).

Part of the RFC clamp loader complex which loads the PCNA sliding clamp onto DNA. This chain is Replication factor C small subunit, found in Sulfurisphaera tokodaii (strain DSM 16993 / JCM 10545 / NBRC 100140 / 7) (Sulfolobus tokodaii).